The following is a 417-amino-acid chain: NADH-quinone oxidoreductase subunit D (417 aa).

Belongs to the complex I 49 kDa subunit family. As to quaternary structure, NDH-1 is composed of 14 different subunits. Subunits NuoB, C, D, E, F, and G constitute the peripheral sector of the complex.

Its subcellular location is the cell inner membrane. The catalysed reaction is a quinone + NADH + 5 H(+)(in) = a quinol + NAD(+) + 4 H(+)(out). Functionally, NDH-1 shuttles electrons from NADH, via FMN and iron-sulfur (Fe-S) centers, to quinones in the respiratory chain. The immediate electron acceptor for the enzyme in this species is believed to be ubiquinone. Couples the redox reaction to proton translocation (for every two electrons transferred, four hydrogen ions are translocated across the cytoplasmic membrane), and thus conserves the redox energy in a proton gradient. In Polynucleobacter necessarius subsp. necessarius (strain STIR1), this protein is NADH-quinone oxidoreductase subunit D.